The sequence spans 492 residues: Ketol-acid reductoisomerase (NADP(+)) (492 aa).

A KARI N-terminal Rossmann domain is found at 14–208 (LDQLGKCRFM…GGHRAGVLQS (195 aa)). NADP(+) contacts are provided by residues 45-48 (CGAQ), Arg-68, Arg-76, Ser-78, and 108-110 (DKQ). His-132 is a catalytic residue. Gly-158 is a binding site for NADP(+). 2 KARI C-terminal knotted domains span residues 209–344 (SFVA…NAPQ) and 345–485 (FDGK…MKDM). Asp-217, Glu-221, Glu-389, and Glu-393 together coordinate Mg(2+). Residue Ser-414 participates in substrate binding.

Belongs to the ketol-acid reductoisomerase family. Requires Mg(2+) as cofactor.

The catalysed reaction is (2R)-2,3-dihydroxy-3-methylbutanoate + NADP(+) = (2S)-2-acetolactate + NADPH + H(+). It carries out the reaction (2R,3R)-2,3-dihydroxy-3-methylpentanoate + NADP(+) = (S)-2-ethyl-2-hydroxy-3-oxobutanoate + NADPH + H(+). It participates in amino-acid biosynthesis; L-isoleucine biosynthesis; L-isoleucine from 2-oxobutanoate: step 2/4. The protein operates within amino-acid biosynthesis; L-valine biosynthesis; L-valine from pyruvate: step 2/4. Functionally, involved in the biosynthesis of branched-chain amino acids (BCAA). Catalyzes an alkyl-migration followed by a ketol-acid reduction of (S)-2-acetolactate (S2AL) to yield (R)-2,3-dihydroxy-isovalerate. In the isomerase reaction, S2AL is rearranged via a Mg-dependent methyl migration to produce 3-hydroxy-3-methyl-2-ketobutyrate (HMKB). In the reductase reaction, this 2-ketoacid undergoes a metal-dependent reduction by NADPH to yield (R)-2,3-dihydroxy-isovalerate. This is Ketol-acid reductoisomerase (NADP(+)) from Pectobacterium carotovorum subsp. carotovorum (strain PC1).